The sequence spans 543 residues: Zinc finger CCHC domain-containing protein 7 (543 aa).

The tract at residues 51-71 is disordered; the sequence is EEEHEEKNSGNSESSSSKPNQ. A compositionally biased stretch (low complexity) spans 59 to 68; the sequence is SGNSESSSSK. Glycyl lysine isopeptide (Lys-Gly) (interchain with G-Cter in SUMO2) cross-links involve residues Lys131, Lys139, Lys141, Lys239, and Lys254. CCHC-type zinc fingers lie at residues 241–258, 263–280, and 304–321; these read IICR…NCPL, RRCF…SCPA, and KQCD…ACTE. Lys339 is covalently cross-linked (Glycyl lysine isopeptide (Lys-Gly) (interchain with G-Cter in SUMO2)). A CCHC-type 4 zinc finger spans residues 348–365; sequence AYCYHCAQKGHYGHECPE. Glycyl lysine isopeptide (Lys-Gly) (interchain with G-Cter in SUMO2) cross-links involve residues Lys412, Lys417, and Lys435. The disordered stretch occupies residues 414–543; it reads PYIKAANENP…FLIKQRKKKS (130 aa). Composition is skewed to basic and acidic residues over residues 441–457 and 465–475; these read QENK…NRNW and RHREVDEDFPR. Lys478 participates in a covalent cross-link: Glycyl lysine isopeptide (Lys-Gly) (interchain with G-Cter in SUMO2). Positions 479–491 are enriched in polar residues; that stretch reads TYSSPGSFKTQKP. Ser482 and Ser485 each carry phosphoserine. Residues Lys487, Lys490, and Lys493 each participate in a glycyl lysine isopeptide (Lys-Gly) (interchain with G-Cter in SUMO2) cross-link. Residues 493-502 are compositionally biased toward basic residues; it reads KPFHRSSHYH. Basic and acidic residues predominate over residues 503–515; that stretch reads TSREDKSPKEGKR. Lys537 participates in a covalent cross-link: Glycyl lysine isopeptide (Lys-Gly) (interchain with G-Cter in SUMO2).

In terms of assembly, component of a nucleolar TRAMP-like complex, an ATP-dependent exosome regulatory complex consisting of a helicase (MTREX), an oligadenylate polymerase (TENT4B or TENT4A), and a substrate specific RNA-binding factor (ZCCHC7 or ZCCHC8). Several TRAMP-like complexes exist with specific compositions and are associated with nuclear, or nucleolar RNA exosomes.

The protein localises to the nucleus. Its subcellular location is the nucleolus. This chain is Zinc finger CCHC domain-containing protein 7 (ZCCHC7), found in Homo sapiens (Human).